The sequence spans 874 residues: Leucine--tRNA ligase (874 aa).

The 'HIGH' region signature appears at 43–53 (PYPSGRIHIGH). Positions 630-634 (KMSKS) match the 'KMSKS' region motif. Lysine 633 is a binding site for ATP.

Belongs to the class-I aminoacyl-tRNA synthetase family.

The protein localises to the cytoplasm. The enzyme catalyses tRNA(Leu) + L-leucine + ATP = L-leucyl-tRNA(Leu) + AMP + diphosphate. In Bradyrhizobium diazoefficiens (strain JCM 10833 / BCRC 13528 / IAM 13628 / NBRC 14792 / USDA 110), this protein is Leucine--tRNA ligase.